The chain runs to 164 residues: Protein-export protein SecB (164 aa).

The protein belongs to the SecB family. Homotetramer, a dimer of dimers. One homotetramer interacts with 1 SecA dimer.

Its subcellular location is the cytoplasm. One of the proteins required for the normal export of preproteins out of the cell cytoplasm. It is a molecular chaperone that binds to a subset of precursor proteins, maintaining them in a translocation-competent state. It also specifically binds to its receptor SecA. The protein is Protein-export protein SecB of Orientia tsutsugamushi (strain Ikeda) (Rickettsia tsutsugamushi).